We begin with the raw amino-acid sequence, 314 residues long: Carbamate kinase (314 aa).

Belongs to the carbamate kinase family. As to quaternary structure, homodimer.

The enzyme catalyses hydrogencarbonate + NH4(+) + ATP = carbamoyl phosphate + ADP + H2O + H(+). Its pathway is metabolic intermediate metabolism; carbamoyl phosphate degradation; CO(2) and NH(3) from carbamoyl phosphate: step 1/1. The protein is Carbamate kinase (CBK) of Trichomonas vaginalis.